The chain runs to 1113 residues: Carbamoyl phosphate synthase large chain (1113 aa).

Positions 1-407 (MPKRSDINHV…ALNKALRSLE (407 aa)) are carboxyphosphate synthetic domain. Positions 134, 174, 180, 181, 213, 215, 220, 246, 247, 248, 290, and 304 each coordinate ATP. Residues 138 to 333 (KDIVTTIGGE…IAKMAAKLAI (196 aa)) enclose the ATP-grasp 1 domain. Residues Gln290, Glu304, and Asn306 each coordinate Mg(2+). Mn(2+)-binding residues include Gln290, Glu304, and Asn306. The tract at residues 408–565 (TKQQGFWTKP…ELDPAAESEV (158 aa)) is oligomerization domain. Residues 566 to 967 (APQTEREKVL…AYAKAEAGAF (402 aa)) are carbamoyl phosphate synthetic domain. The 192-residue stretch at 695–886 (GALLNREQLP…LAKAASRIAV (192 aa)) folds into the ATP-grasp 2 domain. The ATP site is built by Arg731, Arg770, Leu772, Glu777, Gly802, Ile803, His804, Ser805, Gln845, and Glu857. Residues Gln845, Glu857, and Asn859 each coordinate Mg(2+). Mn(2+) is bound by residues Gln845, Glu857, and Asn859. The MGS-like domain occupies 968 to 1113 (GALPTEGTVF…LQELDHAVKA (146 aa)). The allosteric domain stretch occupies residues 968–1113 (GALPTEGTVF…LQELDHAVKA (146 aa)).

It belongs to the CarB family. In terms of assembly, composed of two chains; the small (or glutamine) chain promotes the hydrolysis of glutamine to ammonia, which is used by the large (or ammonia) chain to synthesize carbamoyl phosphate. Tetramer of heterodimers (alpha,beta)4. Mg(2+) serves as cofactor. Mn(2+) is required as a cofactor.

The catalysed reaction is hydrogencarbonate + L-glutamine + 2 ATP + H2O = carbamoyl phosphate + L-glutamate + 2 ADP + phosphate + 2 H(+). It carries out the reaction hydrogencarbonate + NH4(+) + 2 ATP = carbamoyl phosphate + 2 ADP + phosphate + 2 H(+). The protein operates within amino-acid biosynthesis; L-arginine biosynthesis; carbamoyl phosphate from bicarbonate: step 1/1. Its pathway is pyrimidine metabolism; UMP biosynthesis via de novo pathway; (S)-dihydroorotate from bicarbonate: step 1/3. Large subunit of the glutamine-dependent carbamoyl phosphate synthetase (CPSase). CPSase catalyzes the formation of carbamoyl phosphate from the ammonia moiety of glutamine, carbonate, and phosphate donated by ATP, constituting the first step of 2 biosynthetic pathways, one leading to arginine and/or urea and the other to pyrimidine nucleotides. The large subunit (synthetase) binds the substrates ammonia (free or transferred from glutamine from the small subunit), hydrogencarbonate and ATP and carries out an ATP-coupled ligase reaction, activating hydrogencarbonate by forming carboxy phosphate which reacts with ammonia to form carbamoyl phosphate. The chain is Carbamoyl phosphate synthase large chain from Corynebacterium glutamicum (strain ATCC 13032 / DSM 20300 / JCM 1318 / BCRC 11384 / CCUG 27702 / LMG 3730 / NBRC 12168 / NCIMB 10025 / NRRL B-2784 / 534).